The primary structure comprises 204 residues: MLNFWQILILLVIILIVYMYTFKFVQKFILQDAYMHINELEAPPLNFTFQRNRGVDCSLNRLPCVTDQQCRDNCVISSAANELTCQDGFCNASDALVNAQAPDLIECDPALGLVHVFSAGGDFVVSQTCVSTYRDLVDDTGTPRPYLCNDGRLNMNLNTVQFSPDACDCSSGYEKMLFRQTALARTIPVCIPNRMANLYRRVYN.

As to quaternary structure, forms the PIF complex together with PIF1 and PIF2. The complex also interacts with per os infectivity factor PIF0.

Per os factor that plays a role in the initiation of host midgut infection. Unlike PIF1 and PIF2, PIF3 is not involved in specific binding of occluded virions (ODV) to the host midgut target cells. In Lepidoptera (butterflies and moths), this protein is Per os infectivity factor 3 (AC115).